Reading from the N-terminus, the 98-residue chain is NADH-ubiquinone oxidoreductase chain 4L (98 aa).

Transmembrane regions (helical) follow at residues 1–21 (MPVV…GLLV), 29–49 (SLLC…VTVL), and 61–81 (IILL…LVMV).

This sequence belongs to the complex I subunit 4L family. In terms of assembly, core subunit of respiratory chain NADH dehydrogenase (Complex I) which is composed of 45 different subunits.

Its subcellular location is the mitochondrion inner membrane. It carries out the reaction a ubiquinone + NADH + 5 H(+)(in) = a ubiquinol + NAD(+) + 4 H(+)(out). Functionally, core subunit of the mitochondrial membrane respiratory chain NADH dehydrogenase (Complex I) which catalyzes electron transfer from NADH through the respiratory chain, using ubiquinone as an electron acceptor. Part of the enzyme membrane arm which is embedded in the lipid bilayer and involved in proton translocation. This chain is NADH-ubiquinone oxidoreductase chain 4L (MT-ND4L), found in Ursus arctos (Brown bear).